The following is a 413-amino-acid chain: Putative syntaxin-5 (413 aa).

Over 1–391 (MSDFHNIRSR…RYLQNISKNR (391 aa)) the chain is Cytoplasmic. The tract at residues 257–290 (KNRRDKFSSGAAVPMGLPSSSSGANVRSKLLQDD) is disordered. In terms of domain architecture, t-SNARE coiled-coil homology spans 321 to 383 (LEYAQARSNT…DMAHSELVRY (63 aa)). The chain crosses the membrane as a helical; Anchor for type IV membrane protein span at residues 392–412 (WLMIQVFGVLMVFFVVFVLFL). Threonine 413 is a topological domain (extracellular).

It belongs to the syntaxin family.

Its subcellular location is the membrane. Its function is as follows. Potentially involved in docking of synaptic vesicles at presynaptic active zones. The sequence is that of Putative syntaxin-5 (syx-5) from Caenorhabditis elegans.